We begin with the raw amino-acid sequence, 751 residues long: Meiotic sister-chromatid recombination protein 3 (751 aa).

5 disordered regions span residues 54-88 (GVGM…RTYS), 216-290 (LRAP…KKQM), 314-410 (PALE…EARF), 431-504 (TQEN…RPSF), and 558-610 (KDVP…SPPQ). The segment covering 216–228 (LRAPPRVQQQRQL) has biased composition (low complexity). Composition is skewed to basic and acidic residues over residues 345-356 (ERSRPAKREVRK) and 384-393 (ERVHNKEKTL). The segment covering 431–496 (TQENSTRDNG…GCETGNTTPK (66 aa)) has biased composition (polar residues). Over residues 596–609 (RSSISSSPRRSSPP) the composition is skewed to low complexity.

It localises to the cell membrane. May be involved in the control of meiotic sister-chromatid recombination. The polypeptide is Meiotic sister-chromatid recombination protein 3 (MSC3) (Eremothecium gossypii (strain ATCC 10895 / CBS 109.51 / FGSC 9923 / NRRL Y-1056) (Yeast)).